The following is an 857-amino-acid chain: Protein STICHEL-like 2 (857 aa).

Glycine 280–threonine 287 contacts ATP. Cysteine 299, cysteine 309, cysteine 312, and cysteine 315 together coordinate Zn(2+). The stretch at leucine 544 to glutamine 576 forms a coiled coil. Disordered stretches follow at residues serine 593–lysine 629 and alanine 787–leucine 845. A compositionally biased stretch (basic and acidic residues) spans glutamate 599–glutamate 610. Polar residues predominate over residues glutamine 834–serine 843.

Belongs to the DnaX/STICHEL family.

This Arabidopsis thaliana (Mouse-ear cress) protein is Protein STICHEL-like 2.